The primary structure comprises 426 residues: MTKFETVRGMKDYIGIDAEKIRYLESIFRDLAIKYGYSEIITPVVEEFKLFALKGGEELRETMYVFKDKADRELSLRPEITPGVARAYIQNLQSSPKPIRLFYFGTVYRYDEPQYGRYREFRQAGIEMIGDSSILADLEVLDLLYNFYDKLNLSNDITIKINNIGVFRKIMDKYNIEDNLQEHILHLIDKNKINEALDILEKNIKNKDIIDFFNKILTKKDTKLEDIESLAELEEVSRLDIKSEFLYLFRLSRILSNLNIKFKIDLGFVRGLAYYTGLIFEVLHPSVQFSIAGGGRYDKLIELYGGLPSPAIGFAIGVERTLLVIKDLKVEEPVNVIVIGMSEDAIPSMFMVSRILRKEEYKVVINTKDQPLSKLLPYYASQGFKLAIIIGKQELEKNMITVRNLITRKQISVPLENVEDAIKQTL.

It belongs to the class-II aminoacyl-tRNA synthetase family.

It localises to the cytoplasm. The enzyme catalyses tRNA(His) + L-histidine + ATP = L-histidyl-tRNA(His) + AMP + diphosphate + H(+). The polypeptide is Histidine--tRNA ligase (Saccharolobus shibatae (strain ATCC 51178 / DSM 5389 / JCM 8931 / NBRC 15437 / B12) (Sulfolobus shibatae)).